The following is a 167-amino-acid chain: Small ribosomal subunit protein uS5 (167 aa).

The S5 DRBM domain maps to 11–74; that stretch reads LQEKLIAVNR…EKARRAMINV (64 aa).

Belongs to the universal ribosomal protein uS5 family. In terms of assembly, part of the 30S ribosomal subunit. Contacts proteins S4 and S8.

Its function is as follows. With S4 and S12 plays an important role in translational accuracy. Functionally, located at the back of the 30S subunit body where it stabilizes the conformation of the head with respect to the body. This is Small ribosomal subunit protein uS5 from Yersinia enterocolitica serotype O:8 / biotype 1B (strain NCTC 13174 / 8081).